A 175-amino-acid chain; its full sequence is Co-chaperone protein HscB homolog (175 aa).

Residues Asp8–Leu80 form the J domain.

This sequence belongs to the HscB family. Interacts with HscA and stimulates its ATPase activity.

Functionally, co-chaperone involved in the maturation of iron-sulfur cluster-containing proteins. Seems to help targeting proteins to be folded toward HscA. This chain is Co-chaperone protein HscB homolog, found in Chromobacterium violaceum (strain ATCC 12472 / DSM 30191 / JCM 1249 / CCUG 213 / NBRC 12614 / NCIMB 9131 / NCTC 9757 / MK).